Reading from the N-terminus, the 424-residue chain is Isoflavipucine cluster transcription factor ATEG_00326 (424 aa).

Positions 10-38 (CDRCHGQKLRCIHSGGGPCVRCAKAKATC) form a DNA-binding region, zn(2)-C6 fungal-type. The interval 265–286 (ARMQTPEGTPERTSESSPSGPP) is disordered.

It localises to the nucleus. Its function is as follows. Transcription factor that regulates the expression of the gene cluster that mediates the biosynthesis of isoflavipucine. This chain is Isoflavipucine cluster transcription factor ATEG_00326, found in Aspergillus terreus (strain NIH 2624 / FGSC A1156).